The sequence spans 696 residues: Methionine--tRNA ligase (696 aa).

A 'HIGH' region motif is present at residues 12–22 (PYANGPLHLGH). Positions 143, 146, 156, and 159 each coordinate Zn(2+). A 'KMSKS' region motif is present at residues 330–334 (KMSKS). Lysine 333 is an ATP binding site. The tRNA-binding domain maps to 593 to 696 (DFAKLDLRIG…AGAQPGMPVR (104 aa)).

This sequence belongs to the class-I aminoacyl-tRNA synthetase family. MetG type 1 subfamily. In terms of assembly, homodimer. Requires Zn(2+) as cofactor.

Its subcellular location is the cytoplasm. It carries out the reaction tRNA(Met) + L-methionine + ATP = L-methionyl-tRNA(Met) + AMP + diphosphate. Functionally, is required not only for elongation of protein synthesis but also for the initiation of all mRNA translation through initiator tRNA(fMet) aminoacylation. This Xanthomonas campestris pv. campestris (strain 8004) protein is Methionine--tRNA ligase.